The primary structure comprises 406 residues: Imidazolonepropionase (406 aa).

The Fe(3+) site is built by His-72 and His-74. Residues His-72 and His-74 each contribute to the Zn(2+) site. The 4-imidazolone-5-propanoate site is built by Arg-81, Tyr-144, and His-177. Tyr-144 provides a ligand contact to N-formimidoyl-L-glutamate. Position 242 (His-242) interacts with Fe(3+). His-242 is a Zn(2+) binding site. Residue Gln-245 coordinates 4-imidazolone-5-propanoate. Asp-317 serves as a coordination point for Fe(3+). Asp-317 is a Zn(2+) binding site. Residues Asn-319 and Gly-321 each contribute to the N-formimidoyl-L-glutamate site. Thr-322 contacts 4-imidazolone-5-propanoate.

This sequence belongs to the metallo-dependent hydrolases superfamily. HutI family. The cofactor is Zn(2+). It depends on Fe(3+) as a cofactor.

Its subcellular location is the cytoplasm. The catalysed reaction is 4-imidazolone-5-propanoate + H2O = N-formimidoyl-L-glutamate. The protein operates within amino-acid degradation; L-histidine degradation into L-glutamate; N-formimidoyl-L-glutamate from L-histidine: step 3/3. Catalyzes the hydrolytic cleavage of the carbon-nitrogen bond in imidazolone-5-propanoate to yield N-formimidoyl-L-glutamate. It is the third step in the universal histidine degradation pathway. The protein is Imidazolonepropionase of Yersinia enterocolitica serotype O:8 / biotype 1B (strain NCTC 13174 / 8081).